A 290-amino-acid polypeptide reads, in one-letter code: Porphobilinogen deaminase (290 aa).

C237 is modified (S-(dipyrrolylmethanemethyl)cysteine).

It belongs to the HMBS family. Monomer. Dipyrromethane is required as a cofactor.

It carries out the reaction 4 porphobilinogen + H2O = hydroxymethylbilane + 4 NH4(+). The protein operates within porphyrin-containing compound metabolism; protoporphyrin-IX biosynthesis; coproporphyrinogen-III from 5-aminolevulinate: step 2/4. Functionally, tetrapolymerization of the monopyrrole PBG into the hydroxymethylbilane pre-uroporphyrinogen in several discrete steps. The chain is Porphobilinogen deaminase from Clostridium kluyveri (strain NBRC 12016).